A 269-amino-acid chain; its full sequence is Protein TORNADO 2 (269 aa).

The Cytoplasmic segment spans residues 1–10 (MPLSNNVIGC). A helical membrane pass occupies residues 11-31 (INFITVLLSIPVIGAGIWLAI). Residues 32–44 (GTVNSCVKLLQWP) are Extracellular-facing. Residues 45–65 (VIILGVLILLVGLAGFIGGFW) form a helical membrane-spanning segment. At 66–71 (RITWLL) the chain is on the cytoplasmic side. A helical membrane pass occupies residues 72–92 (VVYLIAMLILIVLLGCLVGFI). The Extracellular segment spans residues 93–231 (YMVTIRGSGH…NIKVDWLKAD (139 aa)). A glycan (N-linked (GlcNAc...) asparagine) is linked at N200. The helical transmembrane segment at 232-252 (IFLLLALIGLIIVYIIGCCAF) threads the bilayer. The Cytoplasmic portion of the chain corresponds to 253-269 (RNAETEDIFRKYKQGYT).

This sequence belongs to the tetraspanin (TM4SF) family. Expressed in seedlings, roots, leaves, stems, apex, siliques and flowers. Present in ovules, prominently in nucellus and integuments.

Its subcellular location is the membrane. Its function is as follows. Involved in the basipetal transport of auxin (IAA) that modulates growth and organs organization, as well as cell differentiation. Regulates shoot apical meristem (SAM) organization in the peripheral zone. Required for initial meristematic divisions in the epidermal/lateral root cap leading to the formation of epidermal cells and a clone of lateral root cap cells, as well as for the maintenance of the radial pattern of cell specification in the root, thus regulating the distinction between the lateral root cap and epidermis. Together with WIH peptides, promotes megasporogenesis. This is Protein TORNADO 2 (TRN2) from Arabidopsis thaliana (Mouse-ear cress).